A 429-amino-acid polypeptide reads, in one-letter code: MKKLNTQSPDFQAGLKALLAFETAQNPETERIVADICADVQKRGDAALIEYTNKFDQTNAKSIDDLILTQADLKAAFERIPNDVQTALQTAARRVESYHQRQKMESWSYTDEDGTLLGQQITPLDRVGIYVPGGKAAYPSSVIMNAMPAHVAGVKEIIMVVPTPKGERNDIVLAAAYVAGVTKVFTVGGAQAVAALAYGTETIPQVDKITGPGNAFVAAAKRRVFGVVGIDMVAGPSEILVIADGTTPADWVAMDLFSQAEHDEIAQAILIGTSQAYLDEVEAAMDRLIETMPRRDIIEASLGNRGAMILAKDLDEACEIANYISPEHLELSVENPQEWAKKIRHAGAIFMGRYTGESLGDYCAGPNHVLPTSRTARFSSPLGTYDFQKRSSLIQVSEQGAQKLGETASVLAHGESLTAHARAAEFRMK.

Residues tyrosine 130, glutamine 191, and asparagine 214 each coordinate NAD(+). Serine 237, glutamine 259, and histidine 262 together coordinate substrate. 2 residues coordinate Zn(2+): glutamine 259 and histidine 262. Residues glutamate 327 and histidine 328 each act as proton acceptor in the active site. Substrate-binding residues include histidine 328, aspartate 361, glutamate 415, and histidine 420. Aspartate 361 provides a ligand contact to Zn(2+). Histidine 420 contributes to the Zn(2+) binding site.

This sequence belongs to the histidinol dehydrogenase family. It depends on Zn(2+) as a cofactor.

The catalysed reaction is L-histidinol + 2 NAD(+) + H2O = L-histidine + 2 NADH + 3 H(+). It participates in amino-acid biosynthesis; L-histidine biosynthesis; L-histidine from 5-phospho-alpha-D-ribose 1-diphosphate: step 9/9. In terms of biological role, catalyzes the sequential NAD-dependent oxidations of L-histidinol to L-histidinaldehyde and then to L-histidine. In Neisseria meningitidis serogroup A / serotype 4A (strain DSM 15465 / Z2491), this protein is Histidinol dehydrogenase.